Here is a 355-residue protein sequence, read N- to C-terminus: 3-dehydroquinate synthase (355 aa).

Residues 71–76 (EGEERK), 105–109 (GVVGD), 129–130 (TS), Lys-142, and Lys-151 each bind NAD(+). Zn(2+) contacts are provided by Glu-184, His-246, and His-263.

Belongs to the sugar phosphate cyclases superfamily. Dehydroquinate synthase family. It depends on Co(2+) as a cofactor. Requires Zn(2+) as cofactor. NAD(+) is required as a cofactor.

It localises to the cytoplasm. The catalysed reaction is 7-phospho-2-dehydro-3-deoxy-D-arabino-heptonate = 3-dehydroquinate + phosphate. Its pathway is metabolic intermediate biosynthesis; chorismate biosynthesis; chorismate from D-erythrose 4-phosphate and phosphoenolpyruvate: step 2/7. In terms of biological role, catalyzes the conversion of 3-deoxy-D-arabino-heptulosonate 7-phosphate (DAHP) to dehydroquinate (DHQ). The polypeptide is 3-dehydroquinate synthase (Streptococcus pneumoniae (strain ATCC 700669 / Spain 23F-1)).